The primary structure comprises 61 residues: Inner membrane protein p12 (61 aa).

A helical transmembrane segment spans residues 16 to 36 (LLIVAIIVVIMAIMLYYFWWM).

This sequence belongs to the asfivirus inner membrane protein p12 family. In terms of assembly, homomultimer; disulfide-linked. Post-translationally, not glycosylated.

Its subcellular location is the virion membrane. This Ornithodoros (relapsing fever ticks) protein is Inner membrane protein p12.